The chain runs to 809 residues: WD repeat protein iqw1 (809 aa).

WD repeat units follow at residues 43 to 82 (GHTGCVNTLDWSADGEFLLSGSDDTRLIVWDVFNEYKPRH), 87 to 128 (GHVQ…EGGM), 141 to 180 (CALDSVKNIVPCDNGHTFLVCSEDGTARQYDIREPHVCNQ), 193 to 233 (PYRI…KSFR), and 241 to 295 (SPEK…LFHV). Positions 599–644 (SMYTGHSDLNDDDDDYQDEESYSYASDDDDESDEDSDEGPTLLSLR) are disordered. The segment covering 608-636 (NDDDDDYQDEESYSYASDDDDESDEDSDE) has biased composition (acidic residues). WD repeat units follow at residues 668–708 (CNVE…ILAI) and 711–750 (GDSEAVNVIEGHPRCPTLAVSGIDSTVKIFNTENTPPSGC).

As to quaternary structure, interacts with ddb1.

It localises to the cytoplasm. In terms of biological role, ligand-dependent coactivator of nuclear receptors that may function as a substrate receptor for CUL4-DDB1 E3 ubiquitin-protein ligase complex. This is WD repeat protein iqw1 (iqw1) from Schizosaccharomyces pombe (strain 972 / ATCC 24843) (Fission yeast).